The following is a 338-amino-acid chain: tRNA N6-adenosine threonylcarbamoyltransferase (338 aa).

Fe cation contacts are provided by H114 and H118. Residues 136 to 140 (LVSGG), D169, G182, D186, and N275 each bind substrate. D301 contributes to the Fe cation binding site.

This sequence belongs to the KAE1 / TsaD family. It depends on Fe(2+) as a cofactor.

The protein resides in the cytoplasm. The catalysed reaction is L-threonylcarbamoyladenylate + adenosine(37) in tRNA = N(6)-L-threonylcarbamoyladenosine(37) in tRNA + AMP + H(+). Its function is as follows. Required for the formation of a threonylcarbamoyl group on adenosine at position 37 (t(6)A37) in tRNAs that read codons beginning with adenine. Is involved in the transfer of the threonylcarbamoyl moiety of threonylcarbamoyl-AMP (TC-AMP) to the N6 group of A37, together with TsaE and TsaB. TsaD likely plays a direct catalytic role in this reaction. This Streptococcus equi subsp. equi (strain 4047) protein is tRNA N6-adenosine threonylcarbamoyltransferase.